The sequence spans 98 residues: Lipolysis-activating peptide 1-beta chain (98 aa).

The first 22 residues, 1-22 (MANVQVIFVAYIAVIAFSMVYG), serve as a signal peptide directing secretion. Positions 23 to 91 (DDYKPFGEHN…FLKAMEKQCP (69 aa)) constitute an LCN-type CS-alpha/beta domain. Intrachain disulfides connect cysteine 37–cysteine 60, cysteine 45–cysteine 70, and cysteine 49–cysteine 72.

It belongs to the long (3 C-C) scorpion toxin superfamily. As to quaternary structure, homodimer; disulfide-linked or monomer (edited version) or heterodimer of an alpha chain (AC B8XH01) and this beta chain (non-edited version). As to expression, expressed by the venom gland.

It is found in the secreted. In terms of biological role, the homodimer inhibits HMG-CoA reductase (HMGCR) (32% of inhibition produced by 0.6 uM), a glycoprotein involved in the control of cholesterol biosynthesis. The inhibitory effects of bumarsin are seen at much lower concentrations (0.6 uM) than that for statins such as atorvastatin (5 mM) and simvastatin (10 uM). In addition to inhibition of HMG-CoA reductase, this protein lowers cholesterol levels by inducing steroid hormone synthesis via StAR, and by increasing reverse cholesterol transport mediated by the induction of ABCA1 and APOA1. The heterodimer non-edited LVP1 induces lipolysis in rat adipocytes. Induction of lipolysis by LVP1 appears to be mediated through the beta-2 adrenergic receptor pathway (ADRB2). Its function is as follows. The monomer edited version, similar to alpha-toxins, may modulate voltage-gated sodium channels (Nav) and may block voltage-gated potassium channels (Kv). This Buthus israelis (Israeli scorpion) protein is Lipolysis-activating peptide 1-beta chain.